A 63-amino-acid polypeptide reads, in one-letter code: Bowman-Birk type proteinase inhibitor B-II (63 aa).

7 disulfide bridges follow: Cys-5–Cys-62, Cys-6–Cys-23, Cys-9–Cys-57, Cys-11–Cys-21, Cys-30–Cys-37, Cys-34–Cys-49, and Cys-39–Cys-47.

Belongs to the Bowman-Birk serine protease inhibitor family.

This is Bowman-Birk type proteinase inhibitor B-II from Arachis hypogaea (Peanut).